Reading from the N-terminus, the 315-residue chain is Putative carboxypeptidase RC0549 (315 aa).

Catalysis depends on serine 125, which acts as the Nucleophile. Catalysis depends on charge relay system residues glutamate 225 and histidine 288.

This sequence belongs to the peptidase S66 family.

This chain is Putative carboxypeptidase RC0549, found in Rickettsia conorii (strain ATCC VR-613 / Malish 7).